The sequence spans 625 residues: Vacuolar-sorting receptor 2 (625 aa).

A signal peptide spans 1 to 19; sequence MRTTNVWLVVIVWVTVGWS. At 20-567 the chain is on the lumenal side; that stretch reads SCTGRFVVEK…INRDARGDFS (548 aa). Residues 55–167 enclose the PA domain; it reads QYGGSMSGAV…SLGSAIKTAI (113 aa). Residues Asn-147, Asn-293, and Asn-433 are each glycosylated (N-linked (GlcNAc...) asparagine). EGF-like domains lie at 415 to 465 and 468 to 515; these read ETNE…THCE and GALR…KECK. Intrachain disulfides connect Cys-419–Cys-437, Cys-426–Cys-446, Cys-448–Cys-464, Cys-472–Cys-492, Cys-479–Cys-500, Cys-502–Cys-514, and Cys-544–Cys-557. Residues 516 to 558 enclose the EGF-like 3; calcium-binding domain; it reads DVNECEEKTACQCRDCKCKNTWGSYECSCSGSLLYIREHDICI. Residues 568–588 traverse the membrane as a helical segment; the sequence is WGVIWIIIMGLGAAALGAYTV. At 589–625 the chain is on the cytoplasmic side; that stretch reads YKYRIRTYMDSEIRAIMAQYMPLDNNPNTQLSSQLEL. A Tyrosine-based internalization motif motif is present at residues 608–611; it reads YMPL.

The protein belongs to the VSR (BP-80) family. In terms of tissue distribution, expressed only in flowers.

The protein localises to the membrane. It is found in the golgi apparatus membrane. It localises to the cytoplasmic vesicle. Its subcellular location is the clathrin-coated vesicle membrane. The protein resides in the prevacuolar compartment membrane. In terms of biological role, vacuolar-sorting receptor (VSR) involved in clathrin-coated vesicles sorting from Golgi apparatus to vacuoles. This is Vacuolar-sorting receptor 2 from Arabidopsis thaliana (Mouse-ear cress).